Reading from the N-terminus, the 1067-residue chain is [F-actin]-monooxygenase MICAL1 (1067 aa).

Residues 1–489 are monooxygenase domain; sequence MASPTSTNPA…RDLYDVLAKE (489 aa). FAD is bound by residues cysteine 95, 114-116, 121-123, phenylalanine 181, tyrosine 293, and aspartate 393; these read EKR and RHN. At threonine 475 the chain carries Phosphothreonine. Residues 508–612 enclose the Calponin-homology (CH) domain; the sequence is AGTQEELLRW…YLSHFHSAFK (105 aa). A Phosphoserine modification is found at serine 617. The segment at 645-688 is disordered; that stretch reads SRAKENAEDAGGKKLRLEMEAETPSTEVPPDPEPGVPLTPPSQH. Residues 646–663 show a composition bias toward basic and acidic residues; it reads RAKENAEDAGGKKLRLEM. The stretch at 646 to 666 forms a coiled coil; it reads RAKENAEDAGGKKLRLEMEAE. The segment covering 671-684 has biased composition (pro residues); that stretch reads EVPPDPEPGVPLTP. Residues 695 to 757 enclose the LIM zinc-binding domain; it reads DLCALCGEHL…LQHLPQTDHK (63 aa). Positions 697, 700, 718, 721, 724, 727, 747, and 750 each coordinate Zn(2+). Over residues 755 to 766 the composition is skewed to basic and acidic residues; it reads DHKAEGSDRGPE. Disordered stretches follow at residues 755–838 and 867–886; these read DHKA…RSCS and KEEKESPFSSEEEEEDVPLD. Positions 773–789 are enriched in polar residues; it reads PSENSMPPGLSTPTASQ. Phosphoserine is present on residues serine 872, serine 875, and serine 876. The span at 876–886 shows a compositional bias: acidic residues; the sequence is SEEEEEDVPLD. The important for interaction with RAB8A stretch occupies residues 901-1067; sequence GTMNNYPTWR…ELALGTGAQG (167 aa). In terms of domain architecture, bMERB spans 918 to 1067; the sequence is KEEEMKRFCK…ELALGTGAQG (150 aa). Coiled-coil stretches lie at residues 919-962 and 999-1027; these read EEEM…QSSS and NLEEKQWQLDQELRGYMNREENLKTAADR. Phosphoserine is present on serine 1057.

The protein belongs to the Mical family. In terms of assembly, interacts with STK38 and STK38L. Interacts with RAB1B, RAB8A, RAB10, RAB13, RAB15 and RAB35 (in their GTP-bound forms); binding to RAB1B is of low affinity compared to other Rab proteins; at least in case of RAB8A and RAB10 can bind 2 molecules of the Rab proteins simultaneously; ternary complex formation of RAB8A, RAB13 and MICAL1 is possible. Associates with the SH3 domain of NEDD9. Interacts with VIM and PLXNA3. Interacts with GRAF1/ARHGAP26, GRAF2/ARHGAP10, RAB8A, RAB8B and RAB10; may bind simultaneously to GRAFs and Rabs and connects GRAFs to Rabs. Does not interact with RAB1 and RAB11A. The cofactor is FAD. Expressed in the thymus, lung, spleen, kidney, testis and hematopoietic cells.

The protein localises to the cytoplasm. Its subcellular location is the cytoskeleton. It is found in the endosome membrane. The protein resides in the midbody. It carries out the reaction L-methionyl-[F-actin] + NADPH + O2 + H(+) = L-methionyl-(R)-S-oxide-[F-actin] + NADP(+) + H2O. It catalyses the reaction NADPH + O2 + H(+) = H2O2 + NADP(+). In terms of biological role, monooxygenase that promotes depolymerization of F-actin by mediating oxidation of specific methionine residues on actin to form methionine-sulfoxide, resulting in actin filament disassembly and preventing repolymerization. In the absence of actin, it also functions as a NADPH oxidase producing H(2)O(2). Acts as a cytoskeletal regulator that connects NEDD9 to intermediate filaments. Also acts as a negative regulator of apoptosis via its interaction with STK38 and STK38L; acts by antagonizing STK38 and STK38L activation by MST1/STK4. Involved in regulation of lamina-specific connectivity in the nervous system such as the development of lamina-restricted hippocampal connections. Through redox regulation of the actin cytoskeleton controls the intracellular distribution of secretory vesicles containing L1/neurofascin/NgCAM family proteins in neurons, thereby regulating their cell surface levels. May act as Rab effector protein and play a role in vesicle trafficking. Promotes endosomal tubule extension by associating with RAB8 (RAB8A or RAB8B), RAB10 and GRAF (GRAF1/ARHGAP26 or GRAF2/ARHGAP10) on the endosomal membrane which may connect GRAFs to Rabs, thereby participating in neosynthesized Rab8-Rab10-Rab11-dependent protein export. This chain is [F-actin]-monooxygenase MICAL1 (MICAL1), found in Homo sapiens (Human).